Consider the following 265-residue polypeptide: Hydroxyethylthiazole kinase (265 aa).

Met-43 is a substrate binding site. Residues Lys-118 and Thr-165 each coordinate ATP. Gly-192 is a binding site for substrate.

Belongs to the Thz kinase family. Requires Mg(2+) as cofactor.

It catalyses the reaction 5-(2-hydroxyethyl)-4-methylthiazole + ATP = 4-methyl-5-(2-phosphooxyethyl)-thiazole + ADP + H(+). The protein operates within cofactor biosynthesis; thiamine diphosphate biosynthesis; 4-methyl-5-(2-phosphoethyl)-thiazole from 5-(2-hydroxyethyl)-4-methylthiazole: step 1/1. Catalyzes the phosphorylation of the hydroxyl group of 4-methyl-5-beta-hydroxyethylthiazole (THZ). The protein is Hydroxyethylthiazole kinase of Pyrococcus abyssi (strain GE5 / Orsay).